Consider the following 291-residue polypeptide: MLEGQIIKALSGFYYVFSEGKVYQCRARGNFRKRNISPLVGDDVEFQIENKTDGYILDVMSRENALVRPPVANIDIAILVFSAVEPDFSTNLADRFLVAIEKEDIKPVICISKMDLASESEKEQIAVYKDIYEAIGYDVFVTNDEPDKEAIKDYISGKTAVIAGQSGVGKSTLLNSLNSDLTLKTAEISNSLGRGKHTTRHVELMPIGDGFVADTPGFSSIEWDDLQPETLQFCFPEIEDRRSGCKYRGCMHENEPSCAVKTAVEANEIAEFRYKHYIQILQELKNRKPRY.

One can recognise a CP-type G domain in the interval 63-221; it reads ENALVRPPVA…VADTPGFSSI (159 aa). GTP contacts are provided by residues 112–115 and 164–172; these read SKMD and GQSGVGKST. The Zn(2+) site is built by C245, C250, H252, and C258.

Belongs to the TRAFAC class YlqF/YawG GTPase family. RsgA subfamily. As to quaternary structure, monomer. Associates with 30S ribosomal subunit, binds 16S rRNA. Zn(2+) serves as cofactor.

The protein resides in the cytoplasm. Functionally, one of several proteins that assist in the late maturation steps of the functional core of the 30S ribosomal subunit. Helps release RbfA from mature subunits. May play a role in the assembly of ribosomal proteins into the subunit. Circularly permuted GTPase that catalyzes slow GTP hydrolysis, GTPase activity is stimulated by the 30S ribosomal subunit. This chain is Small ribosomal subunit biogenesis GTPase RsgA 2, found in Listeria monocytogenes serovar 1/2a (strain ATCC BAA-679 / EGD-e).